We begin with the raw amino-acid sequence, 191 residues long: MKKLFLIIGAPGSGKTTDASMIAANDDKFAHYSTGDLLRAEVASGSELGKLIDSFISKGNLVPLEVVVNTIISAIRSSDKNYILIDGYPRSEEQMRELDRVLASQSEVKLDGVIEVDVSEEVARNRVLGRARGADDNNEVFNNRMKVYLDPIKEIRAFYNDKKILHMINGERTIETIVADMKNLIENLIKG.

ATP is bound at residue 12–17 (GSGKTT). An NMP region spans residues 33–62 (STGDLLRAEVASGSELGKLIDSFISKGNLV). Residues Thr34, Arg39, 60–62 (NLV), 87–90 (GYPR), and Gln94 contribute to the AMP site. Residues 129–135 (GRARGAD) are LID. Residue Arg130 participates in ATP binding. Residues Arg132 and Arg144 each contribute to the AMP site. Arg172 contributes to the ATP binding site.

This sequence belongs to the adenylate kinase family. As to quaternary structure, monomer.

Its subcellular location is the cytoplasm. It carries out the reaction AMP + ATP = 2 ADP. It functions in the pathway purine metabolism; AMP biosynthesis via salvage pathway; AMP from ADP: step 1/1. Catalyzes the reversible transfer of the terminal phosphate group between ATP and AMP. Plays an important role in cellular energy homeostasis and in adenine nucleotide metabolism. This is Adenylate kinase from Campylobacter fetus subsp. fetus (strain 82-40).